A 263-amino-acid polypeptide reads, in one-letter code: Pimeloyl-[acyl-carrier protein] methyl ester esterase (263 aa).

Substrate is bound by residues Trp23, 90 to 91 (SL), and 152 to 156 (FLTLQ). Residue Ser90 is the Nucleophile of the active site. Active-site residues include Asp216 and His244. His244 serves as a coordination point for substrate.

This sequence belongs to the AB hydrolase superfamily. Carboxylesterase BioH family. Monomer.

It is found in the cytoplasm. The enzyme catalyses 6-carboxyhexanoyl-[ACP] methyl ester + H2O = 6-carboxyhexanoyl-[ACP] + methanol + H(+). Its pathway is cofactor biosynthesis; biotin biosynthesis. Functionally, the physiological role of BioH is to remove the methyl group introduced by BioC when the pimeloyl moiety is complete. It allows to synthesize pimeloyl-ACP via the fatty acid synthetic pathway through the hydrolysis of the ester bonds of pimeloyl-ACP esters. This chain is Pimeloyl-[acyl-carrier protein] methyl ester esterase, found in Nitrosospira multiformis (strain ATCC 25196 / NCIMB 11849 / C 71).